Reading from the N-terminus, the 709-residue chain is Tyrosine-protein phosphatase cdc-14 (709 aa).

One can recognise a Tyrosine-protein phosphatase domain in the interval 196-354 (DFNWIIPGKI…QKFCWSLSQS (159 aa)). The Phosphocysteine intermediate role is filled by Cys-295. The Nuclear localization signal motif lies at 366–371 (KRNVRR). The Nuclear export signal signature appears at 372 to 381 (LVNQVDDINL). Disordered stretches follow at residues 403 to 541 (VQVQ…LTRT), 573 to 594 (RYLS…GTSP), and 628 to 661 (ESKP…PYPS). Polar residues predominate over residues 404-413 (QVQNGRSTAP). Over residues 463-479 (TTSPNSSSSRRFVKSST) the composition is skewed to low complexity. Composition is skewed to polar residues over residues 480–490 (PQMTVPSQAYL) and 501–521 (PSKN…TPNG). Low complexity predominate over residues 526 to 541 (RTRNSSGNTTSTLTRT). Residues 639 to 649 (PGTSKSTSSLK) show a composition bias toward polar residues.

The protein belongs to the protein-tyrosine phosphatase family. Non-receptor class CDC14 subfamily.

The protein localises to the cytoplasm. Its subcellular location is the cytoskeleton. It localises to the microtubule organizing center. The protein resides in the centrosome. It is found in the spindle. The protein localises to the midbody. Its subcellular location is the nucleus. It carries out the reaction O-phospho-L-tyrosyl-[protein] + H2O = L-tyrosyl-[protein] + phosphate. Its activity is regulated as follows. Inhibited by sodium orthovanadate. Weakly inhibited by sodium fluoride and okadaic acid. In terms of biological role, protein phosphatase that negatively regulates the G1-to-S phase transition to inhibit the cell cycle and establish quiescence in cells of multiple lineages including vulval, hypodermal and intestinal. Promotes nuclear accumulation and activity of the cyclin-dependent kinase inhibitor cki-1 which leads to inhibition of G1 progression during vulval tissue development. Has been shown to not be required for cytokinesis. However, in the embryo, in a contrasting study, has been shown to act as a regulator of central spindle formation and cytokinesis, and may be required for localization of the spindle component zen-4, and its interacting partner air-2 at the spindle during late cell divisions. Main regulator of cell cycle arrest in vulval precursor cells. The chain is Tyrosine-protein phosphatase cdc-14 from Caenorhabditis elegans.